The primary structure comprises 477 residues: Bifunctional protein HldE (477 aa).

The ribokinase stretch occupies residues 1-318 (MKVTLPEFER…ENAVRGRADT (318 aa)). Lys179 carries the N6-acetyllysine modification. Position 195-198 (195-198 (NLSE)) interacts with ATP. Asp264 is a catalytic residue. A cytidylyltransferase region spans residues 344 to 477 (MTNGVFDILH…IKKIQQDKKG (134 aa)).

It in the N-terminal section; belongs to the carbohydrate kinase PfkB family. This sequence in the C-terminal section; belongs to the cytidylyltransferase family. Homodimer.

It carries out the reaction D-glycero-beta-D-manno-heptose 7-phosphate + ATP = D-glycero-beta-D-manno-heptose 1,7-bisphosphate + ADP + H(+). The enzyme catalyses D-glycero-beta-D-manno-heptose 1-phosphate + ATP + H(+) = ADP-D-glycero-beta-D-manno-heptose + diphosphate. Its pathway is nucleotide-sugar biosynthesis; ADP-L-glycero-beta-D-manno-heptose biosynthesis; ADP-L-glycero-beta-D-manno-heptose from D-glycero-beta-D-manno-heptose 7-phosphate: step 1/4. The protein operates within nucleotide-sugar biosynthesis; ADP-L-glycero-beta-D-manno-heptose biosynthesis; ADP-L-glycero-beta-D-manno-heptose from D-glycero-beta-D-manno-heptose 7-phosphate: step 3/4. Its function is as follows. Catalyzes the phosphorylation of D-glycero-D-manno-heptose 7-phosphate at the C-1 position to selectively form D-glycero-beta-D-manno-heptose-1,7-bisphosphate. In terms of biological role, catalyzes the ADP transfer from ATP to D-glycero-beta-D-manno-heptose 1-phosphate, yielding ADP-D-glycero-beta-D-manno-heptose. The polypeptide is Bifunctional protein HldE (Escherichia fergusonii (strain ATCC 35469 / DSM 13698 / CCUG 18766 / IAM 14443 / JCM 21226 / LMG 7866 / NBRC 102419 / NCTC 12128 / CDC 0568-73)).